Reading from the N-terminus, the 95-residue chain is Aspartyl/glutamyl-tRNA(Asn/Gln) amidotransferase subunit C (95 aa).

This sequence belongs to the GatC family. Heterotrimer of A, B and C subunits.

It catalyses the reaction L-glutamyl-tRNA(Gln) + L-glutamine + ATP + H2O = L-glutaminyl-tRNA(Gln) + L-glutamate + ADP + phosphate + H(+). The enzyme catalyses L-aspartyl-tRNA(Asn) + L-glutamine + ATP + H2O = L-asparaginyl-tRNA(Asn) + L-glutamate + ADP + phosphate + 2 H(+). In terms of biological role, allows the formation of correctly charged Asn-tRNA(Asn) or Gln-tRNA(Gln) through the transamidation of misacylated Asp-tRNA(Asn) or Glu-tRNA(Gln) in organisms which lack either or both of asparaginyl-tRNA or glutaminyl-tRNA synthetases. The reaction takes place in the presence of glutamine and ATP through an activated phospho-Asp-tRNA(Asn) or phospho-Glu-tRNA(Gln). The protein is Aspartyl/glutamyl-tRNA(Asn/Gln) amidotransferase subunit C of Paracoccus denitrificans (strain Pd 1222).